The sequence spans 488 residues: Ribulose bisphosphate carboxylase large chain (488 aa).

The substrate site is built by Asn-127 and Thr-177. Lys-179 functions as the Proton acceptor in the catalytic mechanism. Position 181 (Lys-181) interacts with substrate. 3 residues coordinate Mg(2+): Lys-205, Asp-207, and Glu-208. Position 205 is an N6-carboxylysine (Lys-205). Catalysis depends on His-297, which acts as the Proton acceptor. Residues Arg-298, His-330, and Ser-382 each coordinate substrate.

The protein belongs to the RuBisCO large chain family. Type I subfamily. In terms of assembly, heterohexadecamer of 8 large chains and 8 small chains. Requires Mg(2+) as cofactor.

Its subcellular location is the plastid. It localises to the chloroplast. It catalyses the reaction 2 (2R)-3-phosphoglycerate + 2 H(+) = D-ribulose 1,5-bisphosphate + CO2 + H2O. The catalysed reaction is D-ribulose 1,5-bisphosphate + O2 = 2-phosphoglycolate + (2R)-3-phosphoglycerate + 2 H(+). Its function is as follows. RuBisCO catalyzes two reactions: the carboxylation of D-ribulose 1,5-bisphosphate, the primary event in carbon dioxide fixation, as well as the oxidative fragmentation of the pentose substrate in the photorespiration process. Both reactions occur simultaneously and in competition at the same active site. In Emiliania huxleyi (Coccolithophore), this protein is Ribulose bisphosphate carboxylase large chain.